An 896-amino-acid polypeptide reads, in one-letter code: Probable DNA-directed RNA polymerase (896 aa).

Active-site residues include Asp-546, Lys-617, and Asp-798.

This sequence belongs to the phage and mitochondrial RNA polymerase family.

It localises to the mitochondrion. The enzyme catalyses RNA(n) + a ribonucleoside 5'-triphosphate = RNA(n+1) + diphosphate. Its function is as follows. DNA-dependent RNA polymerase catalyzes the transcription of DNA into RNA using the four ribonucleoside triphosphates as substrates. This is Probable DNA-directed RNA polymerase from Neurospora crassa.